Consider the following 314-residue polypeptide: Protein OPG185 (314 aa).

The N-terminal stretch at 1 to 16 is a signal peptide; sequence MTRLPILLLLISLVYA. In terms of domain architecture, Ig-like V-type spans 17–121; the sequence is TPFPQTSKKI…NDTDKVDYEE (105 aa). At 17–278 the chain is on the virion surface side; it reads TPFPQTSKKI…SNYKTKDFVE (262 aa). Cysteines 34 and 103 form a disulfide. N-linked (GlcNAc...) asparagine; by host glycans are attached at residues Asn37, Asn69, Asn112, and Asn161. Positions 193 to 202 are enriched in polar residues; that stretch reads NTVSASSGES. Positions 193 to 214 are disordered; the sequence is NTVSASSGESTTDETPEPITDK. An N-linked (GlcNAc...) asparagine; by host glycan is attached at Asn253. A helical membrane pass occupies residues 279-302; it reads IFGITALIILSAVAIFCITYYIYN. Residues 303–314 are Intravirion-facing; the sequence is KRSRKYKTENKV.

This sequence belongs to the orthopoxvirus OPG185 family. Heterodimerizes with OPG040. The heterodimer OPG185-OPG040 interacts with components of the entry fusion complex OPG143 and OPG094. Heterodimer with C3/VPC protein; disulfide-linked. Glycosylated; contains phosphate and sulfate-substituted glycans. O-glycosylation is required for hemagglutination and hemadsorption activities of infected cell membranes.

It localises to the virion membrane. It is found in the host membrane. In terms of biological role, prevents cell to cell fusion by interacting with and directing the viral OPG040 protein on the host plasma membrane. The OPG185-OPG040 complex associates with components of the entry fusion complex (EFC) presumably to avoid superinfection and syncytium formation. Via its interaction with C3/VCP protein, protects the infected cell and probably also the extracellular enveloped virus from complement attack. The polypeptide is Protein OPG185 (OPG185) (Bos taurus (Bovine)).